The following is a 315-amino-acid chain: Methionyl-tRNA formyltransferase (315 aa).

Residue 113–116 (SLLP) participates in (6S)-5,6,7,8-tetrahydrofolate binding.

This sequence belongs to the Fmt family.

The catalysed reaction is L-methionyl-tRNA(fMet) + (6R)-10-formyltetrahydrofolate = N-formyl-L-methionyl-tRNA(fMet) + (6S)-5,6,7,8-tetrahydrofolate + H(+). Functionally, attaches a formyl group to the free amino group of methionyl-tRNA(fMet). The formyl group appears to play a dual role in the initiator identity of N-formylmethionyl-tRNA by promoting its recognition by IF2 and preventing the misappropriation of this tRNA by the elongation apparatus. This Yersinia enterocolitica serotype O:8 / biotype 1B (strain NCTC 13174 / 8081) protein is Methionyl-tRNA formyltransferase.